Consider the following 886-residue polypeptide: Translation initiation factor IF-2 (886 aa).

Disordered stretches follow at residues 46-91 (LDHL…VEVR) and 121-297 (EQQK…HGFT). The segment covering 72 to 82 (STLSVTGSTGK) has biased composition (polar residues). Basic and acidic residues-rich tracts occupy residues 130 to 163 (AELK…AERK), 175 to 239 (AKSE…DHHL), and 246 to 260 (REAE…EQGT). The tr-type G domain maps to 386 to 555 (PRAPVVTVMG…LNQSELLELT (170 aa)). Positions 395-402 (GHVDHGKT) are G1. GTP is bound at residue 395–402 (GHVDHGKT). Residues 420-424 (GITQH) are G2. A G3 region spans residues 441 to 444 (DTPG). Residues 441–445 (DTPGH) and 495–498 (NKMD) contribute to the GTP site. The G4 stretch occupies residues 495-498 (NKMD). The interval 531 to 533 (SAK) is G5.

The protein belongs to the TRAFAC class translation factor GTPase superfamily. Classic translation factor GTPase family. IF-2 subfamily.

The protein localises to the cytoplasm. In terms of biological role, one of the essential components for the initiation of protein synthesis. Protects formylmethionyl-tRNA from spontaneous hydrolysis and promotes its binding to the 30S ribosomal subunits. Also involved in the hydrolysis of GTP during the formation of the 70S ribosomal complex. The sequence is that of Translation initiation factor IF-2 from Pseudoalteromonas translucida (strain TAC 125).